We begin with the raw amino-acid sequence, 559 residues long: 5'-AMP-activated protein kinase catalytic subunit alpha-1 (559 aa).

Positions 27 to 279 (YILGDTLGVG…IKDIREHEWF (253 aa)) constitute a Protein kinase domain. Threonine 32 carries the phosphothreonine modification. ATP-binding positions include 33 to 41 (LGVGTFGKV) and lysine 56. Aspartate 150 serves as the catalytic Proton acceptor. Threonine 183 carries the phosphothreonine; by LKB1 and CaMKK2 modification. A phosphothreonine mark is found at threonine 269 and threonine 355. Positions 302-381 (EALKEVCEKF…PERVPFLVAE (80 aa)) are AIS. Serine 356 bears the Phosphoserine mark. Serine 360 is modified (phosphoserine; by ULK1). Threonine 368 is modified (phosphothreonine; by ULK1). Phosphothreonine is present on threonine 382. 3 positions are modified to phosphoserine: serine 397, serine 467, and serine 486. Over residues 485–505 (KSGTATPQRSGSVSNYRSCQR) the composition is skewed to polar residues. The tract at residues 485–536 (KSGTATPQRSGSVSNYRSCQRSDSDAEAQGKSSEVSLTSSVTSLDSSPVDLT) is disordered. Threonine 488 and threonine 490 each carry phosphothreonine. Phosphoserine is present on residues serine 496, serine 508, serine 524, and serine 527. A compositionally biased stretch (low complexity) spans 516 to 535 (SSEVSLTSSVTSLDSSPVDL).

This sequence belongs to the protein kinase superfamily. CAMK Ser/Thr protein kinase family. SNF1 subfamily. AMPK is a heterotrimer of an alpha catalytic subunit (PRKAA1 or PRKAA2), a beta (PRKAB1 or PRKAB2) and a gamma non-catalytic subunits (PRKAG1, PRKAG2 or PRKAG3). Interacts with FNIP1 and FNIP2. As to quaternary structure, (Microbial infection) Interacts with Dengue type 2 virus non-structural protein 1; this interaction promotes the AMPK/ERK/mTOR signaling pathway to induce autophagy. The cofactor is Mg(2+). Post-translationally, ubiquitinated. In terms of processing, phosphorylated at Thr-183 by STK11/LKB1 in complex with STE20-related adapter-alpha (STRADA) pseudo kinase and CAB39. Also phosphorylated at Thr-183 by CAMKK2; triggered by a rise in intracellular calcium ions, without detectable changes in the AMP/ATP ratio. CAMKK1 can also phosphorylate Thr-183, but at a much lower level. Dephosphorylated by protein phosphatase 2A and 2C (PP2A and PP2C). Phosphorylated by ULK1 and ULK2; leading to negatively regulate AMPK activity and suggesting the existence of a regulatory feedback loop between ULK1, ULK2 and AMPK. Dephosphorylated by PPM1A and PPM1B. Glycosylated; O-GlcNAcylated by OGT, promoting the AMP-activated protein kinase (AMPK) activity.

It localises to the cytoplasm. The protein localises to the nucleus. It carries out the reaction L-seryl-[protein] + ATP = O-phospho-L-seryl-[protein] + ADP + H(+). The catalysed reaction is L-threonyl-[protein] + ATP = O-phospho-L-threonyl-[protein] + ADP + H(+). The enzyme catalyses L-seryl-[acetyl-CoA carboxylase] + ATP = O-phospho-L-seryl-[acetyl-CoA carboxylase] + ADP + H(+). It catalyses the reaction L-seryl-[3-hydroxy-3-methylglutaryl-coenzyme A reductase] + ATP = O-phospho-L-seryl-[3-hydroxy-3-methylglutaryl-coenzyme A reductase] + ADP + H(+). It carries out the reaction L-seryl-[tau protein] + ATP = O-phospho-L-seryl-[tau protein] + ADP + H(+). The catalysed reaction is L-threonyl-[tau protein] + ATP = O-phospho-L-threonyl-[tau protein] + ADP + H(+). With respect to regulation, activated by phosphorylation on Thr-183. Binding of AMP to non-catalytic gamma subunit (PRKAG1, PRKAG2 or PRKAG3) results in allosteric activation, inducing phosphorylation on Thr-183. AMP-binding to gamma subunit also sustains activity by preventing dephosphorylation of Thr-183. ADP also stimulates Thr-183 phosphorylation, without stimulating already phosphorylated AMPK. ATP promotes dephosphorylation of Thr-183, rendering the enzyme inactive. Under physiological conditions AMPK mainly exists in its inactive form in complex with ATP, which is much more abundant than AMP. AMPK is activated by antihyperglycemic drug metformin, a drug prescribed to patients with type 2 diabetes: in vivo, metformin seems to mainly inhibit liver gluconeogenesis. However, metformin can be used to activate AMPK in muscle and other cells in culture or ex vivo. Selectively inhibited by compound C (6-[4-(2-Piperidin-1-yl-ethoxy)-phenyl)]-3-pyridin-4-yl-pyyrazolo[1,5-a] pyrimidine. Activated by resveratrol, a natural polyphenol present in red wine, and S17834, a synthetic polyphenol. Its function is as follows. Catalytic subunit of AMP-activated protein kinase (AMPK), an energy sensor protein kinase that plays a key role in regulating cellular energy metabolism. In response to reduction of intracellular ATP levels, AMPK activates energy-producing pathways and inhibits energy-consuming processes: inhibits protein, carbohydrate and lipid biosynthesis, as well as cell growth and proliferation. AMPK acts via direct phosphorylation of metabolic enzymes, and by longer-term effects via phosphorylation of transcription regulators. Regulates lipid synthesis by phosphorylating and inactivating lipid metabolic enzymes such as ACACA, ACACB, GYS1, HMGCR and LIPE; regulates fatty acid and cholesterol synthesis by phosphorylating acetyl-CoA carboxylase (ACACA and ACACB) and hormone-sensitive lipase (LIPE) enzymes, respectively. Promotes lipolysis of lipid droplets by mediating phosphorylation of isoform 1 of CHKA (CHKalpha2). Regulates insulin-signaling and glycolysis by phosphorylating IRS1, PFKFB2 and PFKFB3. AMPK stimulates glucose uptake in muscle by increasing the translocation of the glucose transporter SLC2A4/GLUT4 to the plasma membrane, possibly by mediating phosphorylation of TBC1D4/AS160. Regulates transcription and chromatin structure by phosphorylating transcription regulators involved in energy metabolism such as CRTC2/TORC2, FOXO3, histone H2B, HDAC5, MEF2C, MLXIPL/ChREBP, EP300, HNF4A, p53/TP53, SREBF1, SREBF2 and PPARGC1A. Acts as a key regulator of glucose homeostasis in liver by phosphorylating CRTC2/TORC2, leading to CRTC2/TORC2 sequestration in the cytoplasm. In response to stress, phosphorylates 'Ser-36' of histone H2B (H2BS36ph), leading to promote transcription. Acts as a key regulator of cell growth and proliferation by phosphorylating FNIP1, TSC2, RPTOR, WDR24 and ATG1/ULK1: in response to nutrient limitation, negatively regulates the mTORC1 complex by phosphorylating RPTOR component of the mTORC1 complex and by phosphorylating and activating TSC2. Also phosphorylates and inhibits GATOR2 subunit WDR24 in response to nutrient limitation, leading to suppress glucose-mediated mTORC1 activation. In response to energetic stress, phosphorylates FNIP1, inactivating the non-canonical mTORC1 signaling, thereby promoting nuclear translocation of TFEB and TFE3, and inducing transcription of lysosomal or autophagy genes. In response to nutrient limitation, promotes autophagy by phosphorylating and activating ATG1/ULK1. In that process, it also activates WDR45/WIPI4. Phosphorylates CASP6, thereby preventing its autoprocessing and subsequent activation. In response to nutrient limitation, phosphorylates transcription factor FOXO3 promoting FOXO3 mitochondrial import. Also acts as a regulator of cellular polarity by remodeling the actin cytoskeleton; probably by indirectly activating myosin. AMPK also acts as a regulator of circadian rhythm by mediating phosphorylation of CRY1, leading to destabilize it. May regulate the Wnt signaling pathway by phosphorylating CTNNB1, leading to stabilize it. Also has tau-protein kinase activity: in response to amyloid beta A4 protein (APP) exposure, activated by CAMKK2, leading to phosphorylation of MAPT/TAU; however the relevance of such data remains unclear in vivo. Also phosphorylates CFTR, EEF2K, KLC1, NOS3 and SLC12A1. Regulates hepatic lipogenesis. Activated via SIRT3, represses sterol regulatory element-binding protein (SREBP) transcriptional activities and ATP-consuming lipogenesis to restore cellular energy balance. Upon stress, regulates mitochondrial fragmentation through phosphorylation of MTFR1L. The sequence is that of 5'-AMP-activated protein kinase catalytic subunit alpha-1 from Homo sapiens (Human).